The primary structure comprises 122 residues: Large ribosomal subunit protein uL14 (122 aa).

Belongs to the universal ribosomal protein uL14 family. As to quaternary structure, part of the 50S ribosomal subunit. Forms a cluster with proteins L3 and L19. In the 70S ribosome, L14 and L19 interact and together make contacts with the 16S rRNA in bridges B5 and B8.

In terms of biological role, binds to 23S rRNA. Forms part of two intersubunit bridges in the 70S ribosome. This is Large ribosomal subunit protein uL14 from Ruminiclostridium cellulolyticum (strain ATCC 35319 / DSM 5812 / JCM 6584 / H10) (Clostridium cellulolyticum).